Consider the following 422-residue polypeptide: Steroid hormone receptor ERR1 (422 aa).

The interval 1–67 (MSSQVVGIEP…GAGPGEQGGG (67 aa)) is disordered. Residues serine 19 and serine 22 each carry the phosphoserine modification. The span at 58 to 67 (GAGPGEQGGG) shows a compositional bias: gly residues. The nuclear receptor DNA-binding region spans 76-151 (KRLCLVCGDV…VGMLKEGVRL (76 aa)). NR C4-type zinc fingers lie at residues 79–99 (CLVC…CEAC) and 115–134 (CPAS…CQAC). N6-acetyllysine; by PCAF/KAT2B is present on residues lysine 129, lysine 138, lysine 160, and lysine 162. Residues lysine 189 and lysine 402 each participate in a glycyl lysine isopeptide (Lys-Gly) (interchain with G-Cter in SUMO2) cross-link. Positions 192 to 420 (PVNALVSHLL…KLFLEMLEAM (229 aa)) constitute an NR LBD domain.

Belongs to the nuclear hormone receptor family. NR3 subfamily. Binds DNA as a monomer or a homodimer. Interacts (via the AF2 domain) with coactivator PPARGC1A (via the L3 motif); the interaction greatly enhances transcriptional activity of genes involved in energy metabolism. Interacts with PIAS4; the interaction enhances sumoylation. Interacts with MAPK15; promotes re-localization of ESRRA to the cytoplasm through a XPO1-dependent mechanism then inhibits ESRRA transcriptional activity. In terms of processing, phosphorylation on Ser-19 enhances sumoylation on Lys-14 increasing repression of transcriptional activity. Sumoylated with SUMO2. Main site is Lys-14 which is enhanced by phosphorylation on Ser-19, cofactor activation, and by interaction with PIAS4. Sumoylation enhances repression of transcriptional activity, but has no effect on subcellular location nor on DNA binding. Post-translationally, reversibly acetylated. Acetylation by PCAF/KAT2 at Lys-129, Lys-138, Lys-160 and Lys-162 and PCAF/KAT2 decreases transcriptional activity probably by inhibiting DNA-binding activity; deacetylation involves SIRT1 and HDAC8 and increases DNA-binding.

The protein localises to the nucleus. The protein resides in the cytoplasm. In terms of biological role, binds to an ERR-alpha response element (ERRE) containing a single consensus half-site, 5'-TNAAGGTCA-3'. Can bind to the medium-chain acyl coenzyme A dehydrogenase (MCAD) response element NRRE-1 and may act as an important regulator of MCAD promoter. May function as a modulator of the estrogen signaling pathway in the uterus. Induces the expression of PERM1 in the skeletal muscle. This Canis lupus familiaris (Dog) protein is Steroid hormone receptor ERR1 (ESRRA).